Consider the following 510-residue polypeptide: Fumarate hydratase, mitochondrial (510 aa).

A mitochondrion-targeting transit peptide spans M1–M44. Residues K61, K66, and K80 each carry the N6-acetyllysine; alternate modification. N6-succinyllysine; alternate occurs at positions 61, 66, and 80. A phosphothreonine mark is found at T85 and T90. The residue at position 94 (K94) is an N6-acetyllysine. K115 and K122 each carry N6-acetyllysine; alternate. 2 positions are modified to N6-succinyllysine; alternate: K115 and K122. Substrate-binding positions include S145–T147, H176–D179, and S186–N188. K213 is subject to N6-acetyllysine. The residue at position 223 (K223) is an N6-acetyllysine; alternate. K223 carries the N6-succinyllysine; alternate modification. T234 contacts substrate. Catalysis depends on H235, which acts as the Proton donor/acceptor. A Phosphothreonine modification is found at T236. N6-acetyllysine is present on K256. K292 carries the N6-acetyllysine; alternate modification. K292 is subject to N6-succinyllysine; alternate. S365 is an active-site residue. Residues S366 and K371 to N373 contribute to the substrate site. Position 366 is a phosphoserine (S366). N6-succinyllysine is present on residues K467 and K473. K502 carries the N6-acetyllysine modification.

Belongs to the class-II fumarase/aspartase family. Fumarase subfamily. In terms of assembly, homotetramer. Interacts with H2AZ1. In terms of processing, phosphorylation at Thr-236 by PRKDC in response to DNA damage promotes translocation to the nucleus and recruitment to DNA double-strand breaks (DSBs).

It is found in the mitochondrion. The protein localises to the cytoplasm. Its subcellular location is the cytosol. The protein resides in the nucleus. It localises to the chromosome. The enzyme catalyses (S)-malate = fumarate + H2O. It functions in the pathway carbohydrate metabolism; tricarboxylic acid cycle; (S)-malate from fumarate: step 1/1. Functionally, catalyzes the reversible stereospecific interconversion of fumarate to L-malate. Experiments in other species have demonstrated that specific isoforms of this protein act in defined pathways and favor one direction over the other. Catalyzes the hydration of fumarate to L-malate in the tricarboxylic acid (TCA) cycle to facilitate a transition step in the production of energy in the form of NADH. In terms of biological role, catalyzes the dehydration of L-malate to fumarate. Fumarate metabolism in the cytosol plays a role during urea cycle and arginine metabolism; fumarate being a by-product of the urea cycle and amino-acid catabolism. Also plays a role in DNA repair by promoting non-homologous end-joining (NHEJ). In response to DNA damage and phosphorylation by PRKDC, translocates to the nucleus and accumulates at DNA double-strand breaks (DSBs): acts by catalyzing formation of fumarate, an inhibitor of KDM2B histone demethylase activity, resulting in enhanced dimethylation of histone H3 'Lys-36' (H3K36me2). The sequence is that of Fumarate hydratase, mitochondrial from Macaca fascicularis (Crab-eating macaque).